The chain runs to 265 residues: Mlc titration factor A (265 aa).

Residues His-111, His-148, His-152, and Glu-211 each contribute to the Zn(2+) site.

This sequence belongs to the MtfA family. As to quaternary structure, interacts with Mlc. It depends on Zn(2+) as a cofactor.

It localises to the cytoplasm. Its function is as follows. Involved in the modulation of the activity of the glucose-phosphotransferase system (glucose-PTS). Interacts with the transcriptional repressor Mlc, preventing its interaction with DNA and leading to the modulation of expression of genes regulated by Mlc, including ptsG, which encodes the PTS system glucose-specific EIICB component. In terms of biological role, shows zinc-dependent metallopeptidase activity. The chain is Mlc titration factor A from Escherichia coli (strain ATCC 8739 / DSM 1576 / NBRC 3972 / NCIMB 8545 / WDCM 00012 / Crooks).